A 638-amino-acid chain; its full sequence is Threonine--tRNA ligase (638 aa).

The region spanning 1–61 (MPDIKLPDGS…EQNADLAIIT (61 aa)) is the TGS domain. Positions 242-533 (DHRRLGKQYD…LIENFAGALP (292 aa)) are catalytic. Zn(2+)-binding residues include cysteine 333, histidine 384, and histidine 510.

Belongs to the class-II aminoacyl-tRNA synthetase family. Homodimer. It depends on Zn(2+) as a cofactor.

Its subcellular location is the cytoplasm. The enzyme catalyses tRNA(Thr) + L-threonine + ATP = L-threonyl-tRNA(Thr) + AMP + diphosphate + H(+). Its function is as follows. Catalyzes the attachment of threonine to tRNA(Thr) in a two-step reaction: L-threonine is first activated by ATP to form Thr-AMP and then transferred to the acceptor end of tRNA(Thr). Also edits incorrectly charged L-seryl-tRNA(Thr). The sequence is that of Threonine--tRNA ligase from Dechloromonas aromatica (strain RCB).